The chain runs to 224 residues: Urease accessory protein UreF (224 aa).

The protein belongs to the UreF family. As to quaternary structure, ureD, UreF and UreG form a complex that acts as a GTP-hydrolysis-dependent molecular chaperone, activating the urease apoprotein by helping to assemble the nickel containing metallocenter of UreC. The UreE protein probably delivers the nickel.

The protein localises to the cytoplasm. In terms of biological role, required for maturation of urease via the functional incorporation of the urease nickel metallocenter. This Pseudomonas entomophila (strain L48) protein is Urease accessory protein UreF.